The following is a 115-amino-acid chain: Putative septation protein SpoVG (115 aa).

The disordered stretch occupies residues 88–115 (PGTIATSEVSSQLEESDSDKTLSEDLKA). Residues 91–100 (IATSEVSSQL) are compositionally biased toward polar residues. The segment covering 105-115 (SDKTLSEDLKA) has biased composition (basic and acidic residues).

The protein belongs to the SpoVG family.

Functionally, could be involved in septation. This Macrococcus caseolyticus (strain JCSC5402) (Macrococcoides caseolyticum) protein is Putative septation protein SpoVG.